Here is a 225-residue protein sequence, read N- to C-terminus: Uridylate kinase (225 aa).

9 to 10 is a binding site for ATP; it reads GS. Glycine 46 lines the UMP pocket. ATP-binding residues include glycine 47 and arginine 51. Residues aspartate 67 and 115–121 each bind UMP; that span reads THPAHTT. ATP contacts are provided by threonine 141, asparagine 142, tyrosine 147, and aspartate 150.

The protein belongs to the UMP kinase family. As to quaternary structure, homohexamer.

It localises to the cytoplasm. The catalysed reaction is UMP + ATP = UDP + ADP. It functions in the pathway pyrimidine metabolism; CTP biosynthesis via de novo pathway; UDP from UMP (UMPK route): step 1/1. With respect to regulation, inhibited by UTP. In terms of biological role, catalyzes the reversible phosphorylation of UMP to UDP. The chain is Uridylate kinase from Methanococcus maripaludis (strain C7 / ATCC BAA-1331).